The following is a 453-amino-acid chain: Tryptophan biosynthesis protein TrpCF (453 aa).

The segment at Met-1–Glu-257 is indole-3-glycerol phosphate synthase. The segment at Asn-258–Tyr-453 is N-(5'-phosphoribosyl)anthranilate isomerase.

It in the N-terminal section; belongs to the TrpC family. The protein in the C-terminal section; belongs to the TrpF family. In terms of assembly, monomer.

The catalysed reaction is N-(5-phospho-beta-D-ribosyl)anthranilate = 1-(2-carboxyphenylamino)-1-deoxy-D-ribulose 5-phosphate. The enzyme catalyses 1-(2-carboxyphenylamino)-1-deoxy-D-ribulose 5-phosphate + H(+) = (1S,2R)-1-C-(indol-3-yl)glycerol 3-phosphate + CO2 + H2O. It participates in amino-acid biosynthesis; L-tryptophan biosynthesis; L-tryptophan from chorismate: step 3/5. Its pathway is amino-acid biosynthesis; L-tryptophan biosynthesis; L-tryptophan from chorismate: step 4/5. In terms of biological role, bifunctional enzyme that catalyzes two sequential steps of tryptophan biosynthetic pathway. The first reaction is catalyzed by the isomerase, coded by the TrpF domain; the second reaction is catalyzed by the synthase, coded by the TrpC domain. The polypeptide is Tryptophan biosynthesis protein TrpCF (trpC) (Escherichia coli (strain K12)).